Consider the following 84-residue polypeptide: Cell division topological specificity factor (84 aa).

Belongs to the MinE family.

Its function is as follows. Prevents the cell division inhibition by proteins MinC and MinD at internal division sites while permitting inhibition at polar sites. This ensures cell division at the proper site by restricting the formation of a division septum at the midpoint of the long axis of the cell. The sequence is that of Cell division topological specificity factor from Granulibacter bethesdensis (strain ATCC BAA-1260 / CGDNIH1).